Reading from the N-terminus, the 250-residue chain is Isoprenyl transferase (250 aa).

The active site involves Asp27. Asp27 is a Mg(2+) binding site. Residues 28 to 31 (GNRR), Trp32, His48, and 76 to 78 (STE) each bind substrate. Asn79 serves as the catalytic Proton acceptor. Residues Phe80, Arg82, Arg199, and 205–207 (RVS) each bind substrate. Position 218 (Glu218) interacts with Mg(2+).

This sequence belongs to the UPP synthase family. Homodimer. It depends on Mg(2+) as a cofactor.

In terms of biological role, catalyzes the condensation of isopentenyl diphosphate (IPP) with allylic pyrophosphates generating different type of terpenoids. This Chlamydia pneumoniae (Chlamydophila pneumoniae) protein is Isoprenyl transferase.